Reading from the N-terminus, the 718-residue chain is Effector protein hopM1 (718 aa).

The span at 1-10 (MIGTRVGGSG) shows a compositional bias: gly residues. Disordered regions lie at residues 1 to 63 (MIGT…ARLP) and 683 to 718 (GVSS…GRRR). The span at 11–22 (STEIVQANQPQP) shows a compositional bias: polar residues. Over residues 44-60 (ASQSAAQAPESSAAGAA) the composition is skewed to low complexity.

In terms of assembly, interacts with the chaperone ShcM.

Its subcellular location is the secreted. The protein resides in the host membrane. Its function is as follows. Involved in the suppression of basal resistance and promotion of disease symptoms in plants. May be involved in the inhibition of a host vesicle trafficking pathway. In Pseudomonas syringae pv. syringae (strain B728a), this protein is Effector protein hopM1 (hopM1).